The chain runs to 616 residues: Membrane protein insertase YidC (616 aa).

A helical transmembrane segment spans residues 9 to 29; it reads ILAVILSGLVLIAWQYFYNVP. Residues 37 to 80 form a disordered region; that stretch reads QQQAQAELQKTTPQPTASATPGATPQSGGAAQPSTPAAGQQAQP. The span at 44 to 71 shows a compositional bias: polar residues; the sequence is LQKTTPQPTASATPGATPQSGGAAQPST. Transmembrane regions (helical) follow at residues 388 to 408, 462 to 482, 520 to 540, and 559 to 579; these read FFGNFGISILLVTVIVKLLFF, LPVVIQIPVFFSLYKVLFVTI, VFGHYLALGIWPIIMGITMWF, and WMPLIFTFMLAGFPAGLVIYW.

This sequence belongs to the OXA1/ALB3/YidC family. Type 1 subfamily. Interacts with the Sec translocase complex via SecD. Specifically interacts with transmembrane segments of nascent integral membrane proteins during membrane integration.

The protein localises to the cell inner membrane. Functionally, required for the insertion and/or proper folding and/or complex formation of integral membrane proteins into the membrane. Involved in integration of membrane proteins that insert both dependently and independently of the Sec translocase complex, as well as at least some lipoproteins. Aids folding of multispanning membrane proteins. In Bradyrhizobium diazoefficiens (strain JCM 10833 / BCRC 13528 / IAM 13628 / NBRC 14792 / USDA 110), this protein is Membrane protein insertase YidC.